We begin with the raw amino-acid sequence, 491 residues long: Ketol-acid reductoisomerase (NADP(+)) (491 aa).

Positions Ala15–Ser208 constitute a KARI N-terminal Rossmann domain. NADP(+)-binding positions include Cys45–Gln48, Arg68, Arg76, Ser78, and Asp108–Gln110. The active site involves His132. Position 158 (Gly158) interacts with NADP(+). KARI C-terminal knotted domains lie at Ser209 to Gln344 and Tyr345 to Met484. Positions 217, 221, 389, and 393 each coordinate Mg(2+). Ser414 contributes to the substrate binding site.

This sequence belongs to the ketol-acid reductoisomerase family. Mg(2+) serves as cofactor.

It catalyses the reaction (2R)-2,3-dihydroxy-3-methylbutanoate + NADP(+) = (2S)-2-acetolactate + NADPH + H(+). The catalysed reaction is (2R,3R)-2,3-dihydroxy-3-methylpentanoate + NADP(+) = (S)-2-ethyl-2-hydroxy-3-oxobutanoate + NADPH + H(+). Its pathway is amino-acid biosynthesis; L-isoleucine biosynthesis; L-isoleucine from 2-oxobutanoate: step 2/4. It functions in the pathway amino-acid biosynthesis; L-valine biosynthesis; L-valine from pyruvate: step 2/4. Involved in the biosynthesis of branched-chain amino acids (BCAA). Catalyzes an alkyl-migration followed by a ketol-acid reduction of (S)-2-acetolactate (S2AL) to yield (R)-2,3-dihydroxy-isovalerate. In the isomerase reaction, S2AL is rearranged via a Mg-dependent methyl migration to produce 3-hydroxy-3-methyl-2-ketobutyrate (HMKB). In the reductase reaction, this 2-ketoacid undergoes a metal-dependent reduction by NADPH to yield (R)-2,3-dihydroxy-isovalerate. The chain is Ketol-acid reductoisomerase (NADP(+)) from Shigella flexneri.